The primary structure comprises 156 residues: Small ribosomal subunit protein uS7 (156 aa).

This sequence belongs to the universal ribosomal protein uS7 family. In terms of assembly, part of the 30S ribosomal subunit. Contacts proteins S9 and S11.

One of the primary rRNA binding proteins, it binds directly to 16S rRNA where it nucleates assembly of the head domain of the 30S subunit. Is located at the subunit interface close to the decoding center, probably blocks exit of the E-site tRNA. This Alcanivorax borkumensis (strain ATCC 700651 / DSM 11573 / NCIMB 13689 / SK2) protein is Small ribosomal subunit protein uS7.